Reading from the N-terminus, the 139-residue chain is Protein cornichon homolog 4 (139 aa).

3 helical membrane passes run 5–25 (VFLF…YFII), 57–77 (IVTV…NLPV), and 118–138 (LGFY…ALIN).

The protein belongs to the cornichon family. In terms of assembly, interacts with Sec23/24 complex components SEC24B and SEC24D. Interacts with CCR5. Interacts with ADRB2 in the early secretory pathway.

The protein localises to the membrane. It is found in the endoplasmic reticulum. Its subcellular location is the endoplasmic reticulum-Golgi intermediate compartment. Functionally, involved in G protein-coupled receptors (GPCRs) trafficking from the endoplasmic reticulum to the cell surface; it promotes the exit of GPCRs from the early secretory pathway, likely through interaction with the COPII machinery. This chain is Protein cornichon homolog 4 (Cnih4), found in Mus musculus (Mouse).